A 464-amino-acid chain; its full sequence is ATP synthase subunit beta (464 aa).

148–155 (GGAGVGKT) contacts ATP.

The protein belongs to the ATPase alpha/beta chains family. As to quaternary structure, F-type ATPases have 2 components, CF(1) - the catalytic core - and CF(0) - the membrane proton channel. CF(1) has five subunits: alpha(3), beta(3), gamma(1), delta(1), epsilon(1). CF(0) has three main subunits: a(1), b(2) and c(9-12). The alpha and beta chains form an alternating ring which encloses part of the gamma chain. CF(1) is attached to CF(0) by a central stalk formed by the gamma and epsilon chains, while a peripheral stalk is formed by the delta and b chains.

Its subcellular location is the cell inner membrane. The enzyme catalyses ATP + H2O + 4 H(+)(in) = ADP + phosphate + 5 H(+)(out). Produces ATP from ADP in the presence of a proton gradient across the membrane. The catalytic sites are hosted primarily by the beta subunits. This chain is ATP synthase subunit beta, found in Acinetobacter baylyi (strain ATCC 33305 / BD413 / ADP1).